A 291-amino-acid chain; its full sequence is Diaminopimelate epimerase (291 aa).

Positions 13, 46, and 66 each coordinate substrate. C75 acts as the Proton donor in catalysis. Substrate is bound by residues 76–77 (GN), N156, N189, and 207–208 (ER). C216 (proton acceptor) is an active-site residue. 217–218 (GS) contributes to the substrate binding site.

The protein belongs to the diaminopimelate epimerase family. Homodimer.

It is found in the cytoplasm. The enzyme catalyses (2S,6S)-2,6-diaminopimelate = meso-2,6-diaminopimelate. The protein operates within amino-acid biosynthesis; L-lysine biosynthesis via DAP pathway; DL-2,6-diaminopimelate from LL-2,6-diaminopimelate: step 1/1. Its function is as follows. Catalyzes the stereoinversion of LL-2,6-diaminopimelate (L,L-DAP) to meso-diaminopimelate (meso-DAP), a precursor of L-lysine and an essential component of the bacterial peptidoglycan. This is Diaminopimelate epimerase from Rhodospirillum centenum (strain ATCC 51521 / SW).